The following is a 45-amino-acid chain: Defensin Tk-AMP-D4 (45 aa).

Intrachain disulfides connect Cys-3-Cys-45, Cys-14-Cys-34, Cys-20-Cys-39, and Cys-24-Cys-41.

Its function is as follows. Plant defense peptide. The protein is Defensin Tk-AMP-D4 of Triticum kiharae (Wheat).